The primary structure comprises 181 residues: Translationally-controlled tumor protein homolog (181 aa).

A TCTP domain is found at 1 to 181 (MLIYKDIFTD…VKEAIIEEKC (181 aa)).

Belongs to the TCTP family.

The protein resides in the cytoplasm. Involved in calcium binding and microtubule stabilization. This chain is Translationally-controlled tumor protein homolog (tct-1), found in Caenorhabditis elegans.